Consider the following 932-residue polypeptide: ER degradation-enhancing alpha-mannosidase-like protein 3 (932 aa).

Positions 1–41 are cleaved as a signal peptide; that stretch reads MSEAGGRGCGSPVPQRARWRLVAATAAFCLVSATSVWTAGA. Asparagine 118 carries N-linked (GlcNAc...) asparagine glycosylation. Residue glutamate 146 is the Proton donor of the active site. N-linked (GlcNAc...) asparagine glycosylation occurs at asparagine 195. Aspartate 293 is a catalytic residue. Glutamate 387 (proton donor) is an active-site residue. Residue glutamate 405 is part of the active site. Threonine 491 contacts Ca(2+). N-linked (GlcNAc...) asparagine glycosylation is found at asparagine 504 and asparagine 511. The 106-residue stretch at 674 to 779 folds into the PA domain; sequence LSKHKETRGF…KEGSIILDAI (106 aa). The span at 790-799 shows a compositional bias: basic and acidic residues; that stretch reads SDKAKDRDPE. Positions 790–908 are disordered; sequence SDKAKDRDPE…PNVSWGKKVQ (119 aa). Asparagine 810 and asparagine 814 each carry an N-linked (GlcNAc...) asparagine glycan. Residues 812-825 are compositionally biased toward low complexity; sequence SQNQSGEQISSSSQ. Residues 856–890 show a composition bias toward polar residues; sequence ASISPSEQTSNPTENHETTNLNGECTDLDNQLQEQ. Asparagine 900 carries an N-linked (GlcNAc...) asparagine glycan. The Prevents secretion from ER motif lies at 929-932; sequence KDEL.

The protein belongs to the glycosyl hydrolase 47 family. The cofactor is Ca(2+).

The protein localises to the endoplasmic reticulum lumen. It catalyses the reaction N(4)-(alpha-D-Man-(1-&gt;2)-alpha-D-Man-(1-&gt;2)-alpha-D-Man-(1-&gt;3)-[alpha-D-Man-(1-&gt;2)-alpha-D-Man-(1-&gt;3)-[alpha-D-Man-(1-&gt;2)-alpha-D-Man-(1-&gt;6)]-alpha-D-Man-(1-&gt;6)]-beta-D-Man-(1-&gt;4)-beta-D-GlcNAc-(1-&gt;4)-beta-D-GlcNAc)-L-asparaginyl-[protein] (N-glucan mannose isomer 9A1,2,3B1,2,3) + 4 H2O = N(4)-(alpha-D-Man-(1-&gt;3)-[alpha-D-Man-(1-&gt;3)-[alpha-D-Man-(1-&gt;6)]-alpha-D-Man-(1-&gt;6)]-beta-D-Man-(1-&gt;4)-beta-D-GlcNAc-(1-&gt;4)-beta-D-GlcNAc)-L-asparaginyl-[protein] (N-glucan mannose isomer 5A1,2) + 4 beta-D-mannose. The enzyme catalyses N(4)-(alpha-D-Man-(1-&gt;2)-alpha-D-Man-(1-&gt;2)-alpha-D-Man-(1-&gt;3)-[alpha-D-Man-(1-&gt;3)-[alpha-D-Man-(1-&gt;2)-alpha-D-Man-(1-&gt;6)]-alpha-D-Man-(1-&gt;6)]-beta-D-Man-(1-&gt;4)-beta-D-GlcNAc-(1-&gt;4)-beta-D-GlcNAc)-L-asparaginyl-[protein] (N-glucan mannose isomer 8A1,2,3B1,3) + 3 H2O = N(4)-(alpha-D-Man-(1-&gt;3)-[alpha-D-Man-(1-&gt;3)-[alpha-D-Man-(1-&gt;6)]-alpha-D-Man-(1-&gt;6)]-beta-D-Man-(1-&gt;4)-beta-D-GlcNAc-(1-&gt;4)-beta-D-GlcNAc)-L-asparaginyl-[protein] (N-glucan mannose isomer 5A1,2) + 3 beta-D-mannose. The protein operates within protein modification; protein glycosylation. Involved in endoplasmic reticulum-associated degradation (ERAD). Accelerates the glycoprotein ERAD by proteasomes, by catalyzing mannose trimming from Man8GlcNAc2 to Man7GlcNAc2 in the N-glycans. May also participate in mannose trimming from all glycoproteins and not just misfolded ones targeted to ERAD. May have alpha 1,2-mannosidase activity. In Homo sapiens (Human), this protein is ER degradation-enhancing alpha-mannosidase-like protein 3 (EDEM3).